The chain runs to 1442 residues: METKNALFKKIVKISDQLLNKISIKKLTKDKKNNLFVYFDEFVDVTIIDELHQLSKTTLMHDLQIWYINNLKEVDHKKILTFFKKISEQNANLIFLEQINDLNTKIEYNSNLNSLILKINDKLIYDHFIANKLEILNILKVWSLPYSNFEIHFENLSSLLNEKHEQAVNEIISHHIQQQKHLEQQISQQQNFYNNQKANFNYYKNPSNKTITKLIDINPLMNNAKIRAYVFLKKIDILKSGAIAYKLNVIDDSETLTIMTYLPSGEHPLKKFLDELKIDQLIEAEIDIVLDNMSKSGQVPIGKIKKICCVEDKHVKKQITPRLELNFHTKMSSLDAIISTQELIDFAVKNQLKTIGITDRNVVQAYPEIAKFSKKQDLKIIYGLETEELEDQIPLVLNVRDQNLDNATYVIFDIETTGLFPNFDEIIEFGAVIMQNNKQIGEKIQFFIKPIQQINENVTNLTNISQEMVNNAIDEKTALLKIKEIFDDHILVAHNGINFDINFINQRLLKWGLEPLKNPSIDTLMISRAINPFKSHRLGAICKKYEVDYNDESAHRADYDAIVLADVFKVMKNNLFNDFGITNLSEINTKLQTTMLKNRSFGNWINLYIKNQANVKDMYELVSISHTDMYYTRPTITTSFLANKKDKLIISNSIHESDLINALYSKNDEEIKRLIQRYDFITLPSLGSQKHLVYAKKITIENVQKAFKKLIYLALELNKIIIYSSSPYYFFKDDKKFYDVYVNTKGLEGKAHRFANEVYVPDLEYIDQKNAIDELAYLEDEKLINLIINENPVHINSWFDDSIQPLKEGLYAPKMEGVDQKTIDYVYHTAKKIYGENLPTIVEQRIKKELNSIIKHGFSVVYWISHLLVEKSMQDGYGVGSRGSVGSSLVATFLNITDVNPLTPHYLCPNCKKCEFITNADDGFDLAPKSCEQCQTPMLTDGHNIPFETFLGFDGDKVPDIDLNFSGVYQAVAHNFIKSIFGETHSYRAGTIGTMAQTSAENTVKKYFENRFNENKIIRDSTVSLYVQKCIDSKRTTGQHPGGIIIVPKEYSIWDFSPYNFPANDINETWKTTHFAFEYLHDSLLKFDILGHDNPTILKLLKDYTGIDERDVPMYDPLVMKSFSDISALNIKPSDVLNETTGAISIPEFGTRFVRGMLVDTKPKSFADLIRISGLSHGESVWLGNAQSLIKSGKLLKDVIACRDDIMTYLIRQNVEPKTAFLIMEDVRKGKKIKPEHQIILKELKVPEWYIESANKIKYMFPKAHATAYVMHAWKFAWYKIYYPLEYYAAFFSVRADNFDLFVINQGKEFIEKTYNDIEQRSKSRDPQKKVSSRELALQPIYEIVIELLARGFKISNISIEQSQATSYVIDKENNAIIPPFIAIQGLGETVANSIIEARNQKVFSTIEDLKNRTKISRTDLKNLRVLGVLDHLSETEQLTLF.

The Exonuclease domain maps to 409–568; that stretch reads YVIFDIETTG…YDAIVLADVF (160 aa).

Belongs to the DNA polymerase type-C family. PolC subfamily.

It localises to the cytoplasm. The catalysed reaction is DNA(n) + a 2'-deoxyribonucleoside 5'-triphosphate = DNA(n+1) + diphosphate. In terms of biological role, required for replicative DNA synthesis. This DNA polymerase also exhibits 3' to 5' exonuclease activity. This is DNA polymerase III PolC-type from Ureaplasma parvum serovar 3 (strain ATCC 700970).